An 897-amino-acid polypeptide reads, in one-letter code: Echinoderm microtubule-associated protein-like 3 (897 aa).

Met-1 bears the N-acetylmethionine mark. The stretch at 16–43 (LQTLSQRLRVQEEEMELVKAALAEALRL) forms a coiled coil. Over residues 51–68 (TTLQGSGISAPTRNSSIT) the composition is skewed to polar residues. The segment at 51–210 (TTLQGSGISA…GGPGSRRSNY (160 aa)) is disordered. 3 stretches are compositionally biased toward low complexity: residues 96–108 (PSSGPPGLSNGPP), 118–132 (SGTQSEGGCSSSSGA), and 155–164 (RNSSSSSSPS). Residues 175-190 (AASSANLLLRSGSTES) show a composition bias toward polar residues. Ser-177, Ser-199, and Ser-205 each carry phosphoserine. WD repeat units lie at residues 235 to 287 (RSLE…LYRP), 296 to 345 (GGGQ…IWDS), 351 to 393 (LQEI…VWDC), 399 to 435 (LAEIKSTNDSVLAVGFSPRDSSCIVTSGKSHVHFWNW), 449 to 488 (RKQGVFGKYKKPKFIPCFVFLPDGDILTGDSEGNILTWGR), 505 to 544 (YTIVAQAHAHEGSIFALCLRRDGTVLSGGGRDRRLVQWGP), 550 to 585 (QEAEIPEHFGAVRAIAEGLGSELLVGTTKNALLRGD), 590 to 627 (FSPVIQGHTDELWGLCTHPSQNRFLTCGHDRQLCLWDG), 630 to 668 (HALAWSMDLKETGLCADFHPSGAVVVVGLNTGRWLVLDT), 675 to 710 (SDVTDGNEQLSVVRYSPDGLYLAIGSHDNMIYIYSV), 717 to 756 (SSRFGRCMGHSSFITHLDWSKDGNFIMSNSGDYEILYWDV), 766 to 824 (RYES…LFQY), and 831 to 870 (APSRMYSGHGSHVTSVRFTHDDSYLVSLGGKDASIFQWRV). The interval 876 to 897 (SGPAPATPSRTPSLSPASSLDV) is disordered. Thr-882 carries the post-translational modification Phosphothreonine; by CDK1. Over residues 883 to 897 (PSRTPSLSPASSLDV) the composition is skewed to polar residues. Residue Ser-884 is modified to Phosphoserine.

It belongs to the WD repeat EMAP family. Homotrimer; self-association is mediated by the N-terminal coiled coil. Interacts with EML2 but not with EML1. Interacts (phosphorylated at Thr-882) with TUBG1, HAUS1, HAUS2, HAUS3, HAUS4, HAUS5, HAUS6, HAUS7 and HAUS8. Phosphorylation at Thr-882 during mitosis is required for interaction with TUBG1, HAUS1, HAUS2, HAUS3, HAUS4, HAUS5, HAUS6, HAUS7 and HAUS8 and their recruitment to spindle microtubules.

Its subcellular location is the cytoplasm. It localises to the cytoskeleton. It is found in the nucleus. The protein localises to the midbody. The protein resides in the spindle. Its function is as follows. Regulates mitotic spindle assembly, microtubule (MT)-kinetochore attachment and chromosome separation via recruitment of HAUS augmin-like complex and TUBG1 to the existing MTs and promoting MT-based MT nucleation. Required for proper alignnment of chromosomes during metaphase. The protein is Echinoderm microtubule-associated protein-like 3 (Eml3) of Mus musculus (Mouse).